The chain runs to 422 residues: NADH-quinone oxidoreductase subunit D 1 (422 aa).

Belongs to the complex I 49 kDa subunit family. In terms of assembly, NDH-1 is composed of 14 different subunits. Subunits NuoB, C, D, E, F, and G constitute the peripheral sector of the complex.

It is found in the cell membrane. It carries out the reaction a quinone + NADH + 5 H(+)(in) = a quinol + NAD(+) + 4 H(+)(out). Its function is as follows. NDH-1 shuttles electrons from NADH, via FMN and iron-sulfur (Fe-S) centers, to quinones in the respiratory chain. The immediate electron acceptor for the enzyme in this species is believed to be ubiquinone. Couples the redox reaction to proton translocation (for every two electrons transferred, four hydrogen ions are translocated across the cytoplasmic membrane), and thus conserves the redox energy in a proton gradient. The chain is NADH-quinone oxidoreductase subunit D 1 from Herpetosiphon aurantiacus (strain ATCC 23779 / DSM 785 / 114-95).